The primary structure comprises 423 residues: Histidine--tRNA ligase (423 aa).

Belongs to the class-II aminoacyl-tRNA synthetase family. In terms of assembly, homodimer.

It localises to the cytoplasm. It carries out the reaction tRNA(His) + L-histidine + ATP = L-histidyl-tRNA(His) + AMP + diphosphate + H(+). This chain is Histidine--tRNA ligase, found in Haemophilus ducreyi (strain 35000HP / ATCC 700724).